We begin with the raw amino-acid sequence, 168 residues long: Cell division inhibitor SulA (168 aa).

Residues 1-20 are disordered; the sequence is MSTQSVSSHNIESSSFSANQ. A ftsZ binding region spans residues 105–111; that stretch reads ALLTGNY. The interval 161 to 168 is lon protease binding; that stretch reads KIHSTLYH.

It belongs to the SulA family. As to quaternary structure, interacts with FtsZ. In terms of processing, is rapidly cleaved and degraded by the Lon protease once DNA damage is repaired.

In terms of biological role, component of the SOS system and an inhibitor of cell division. Accumulation of SulA causes rapid cessation of cell division and the appearance of long, non-septate filaments. In the presence of GTP, binds a polymerization-competent form of FtsZ in a 1:1 ratio, thus inhibiting FtsZ polymerization and therefore preventing it from participating in the assembly of the Z ring. This mechanism prevents the premature segregation of damaged DNA to daughter cells during cell division. The polypeptide is Cell division inhibitor SulA (Pectobacterium atrosepticum (strain SCRI 1043 / ATCC BAA-672) (Erwinia carotovora subsp. atroseptica)).